The sequence spans 238 residues: uncharacterized protein (238 aa).

The protein belongs to the HyuE racemase family.

This is an uncharacterized protein from Schizosaccharomyces pombe (strain 972 / ATCC 24843) (Fission yeast).